The following is a 283-amino-acid chain: ATP phosphoribosyltransferase (283 aa).

Belongs to the ATP phosphoribosyltransferase family. Long subfamily. Requires Mg(2+) as cofactor.

It is found in the cytoplasm. It catalyses the reaction 1-(5-phospho-beta-D-ribosyl)-ATP + diphosphate = 5-phospho-alpha-D-ribose 1-diphosphate + ATP. It functions in the pathway amino-acid biosynthesis; L-histidine biosynthesis; L-histidine from 5-phospho-alpha-D-ribose 1-diphosphate: step 1/9. Its activity is regulated as follows. Feedback inhibited by histidine. Catalyzes the condensation of ATP and 5-phosphoribose 1-diphosphate to form N'-(5'-phosphoribosyl)-ATP (PR-ATP). Has a crucial role in the pathway because the rate of histidine biosynthesis seems to be controlled primarily by regulation of HisG enzymatic activity. The polypeptide is ATP phosphoribosyltransferase (Salinibacter ruber (strain DSM 13855 / M31)).